A 207-amino-acid polypeptide reads, in one-letter code: Protein 6b (207 aa).

Residues 160–183 form a disordered region; the sequence is GNYTEEGEDDDDEMDDEGEAGGAE. Residues 164 to 178 show a composition bias toward acidic residues; that stretch reads EEGEDDDDEMDDEGE.

Involved in tumor formation and increases auxin and cytokinin effects in host plants. This Agrobacterium tumefaciens (strain Ach5) protein is Protein 6b (6b).